Reading from the N-terminus, the 330-residue chain is 4-hydroxythreonine-4-phosphate dehydrogenase (330 aa).

Substrate contacts are provided by His136 and Thr137. A divalent metal cation-binding residues include His166, His211, and His266. Substrate-binding residues include Lys274, Asn283, and Arg292.

Belongs to the PdxA family. In terms of assembly, homodimer. Zn(2+) serves as cofactor. Requires Mg(2+) as cofactor. Co(2+) is required as a cofactor.

It is found in the cytoplasm. The enzyme catalyses 4-(phosphooxy)-L-threonine + NAD(+) = 3-amino-2-oxopropyl phosphate + CO2 + NADH. The protein operates within cofactor biosynthesis; pyridoxine 5'-phosphate biosynthesis; pyridoxine 5'-phosphate from D-erythrose 4-phosphate: step 4/5. In terms of biological role, catalyzes the NAD(P)-dependent oxidation of 4-(phosphooxy)-L-threonine (HTP) into 2-amino-3-oxo-4-(phosphooxy)butyric acid which spontaneously decarboxylates to form 3-amino-2-oxopropyl phosphate (AHAP). This Erwinia tasmaniensis (strain DSM 17950 / CFBP 7177 / CIP 109463 / NCPPB 4357 / Et1/99) protein is 4-hydroxythreonine-4-phosphate dehydrogenase.